The following is a 395-amino-acid chain: Flavohemoprotein (395 aa).

The Globin domain maps to 1 to 136 (MLDQQTIATI…LANVFIQRES (136 aa)). His85 contacts heme b. Residues Tyr95 and Glu135 each act as charge relay system in the active site. The interval 147–395 (GGWHGIRPFR…YECFGPHKVI (249 aa)) is reductase. The 106-residue stretch at 150-255 (HGIRPFRIVA…AAPHGDFYLE (106 aa)) folds into the FAD-binding FR-type domain. Residues Tyr188 and 204-207 (RQYS) contribute to the FAD site. 268-273 (GVGQTP) contributes to the NADP(+) binding site. Residue 388 to 391 (CFGP) coordinates FAD.

Belongs to the globin family. Two-domain flavohemoproteins subfamily. The protein in the C-terminal section; belongs to the flavoprotein pyridine nucleotide cytochrome reductase family. The cofactor is heme b. FAD serves as cofactor.

It is found in the cytoplasm. It carries out the reaction 2 nitric oxide + NADPH + 2 O2 = 2 nitrate + NADP(+) + H(+). The catalysed reaction is 2 nitric oxide + NADH + 2 O2 = 2 nitrate + NAD(+) + H(+). Its function is as follows. Is involved in NO detoxification in an aerobic process, termed nitric oxide dioxygenase (NOD) reaction that utilizes O(2) and NAD(P)H to convert NO to nitrate, which protects the bacterium from various noxious nitrogen compounds. Therefore, plays a central role in the inducible response to nitrosative stress. In Dickeya dadantii (strain 3937) (Erwinia chrysanthemi (strain 3937)), this protein is Flavohemoprotein (hmp).